Here is a 1551-residue protein sequence, read N- to C-terminus: Serine/threonine-protein kinase MRCK gamma (1551 aa).

One can recognise a Protein kinase domain in the interval 71 to 337; sequence FEILKVIGRG…LDDFRNHPFF (267 aa). ATP contacts are provided by residues 77–85 and lysine 100; that span reads IGRGAFGEV. Aspartate 195 (proton acceptor) is an active-site residue. Residues serine 216 and serine 228 each carry the phosphoserine; by autocatalysis modification. A Phosphothreonine; by autocatalysis modification is found at threonine 234. One can recognise an AGC-kinase C-terminal domain in the interval 338-408; it reads EGVDWERLAS…TSGSHSPESS (71 aa). Coiled coils occupy residues 406–678 and 730–802; these read ESSS…SNWE and KARR…RARG. Disordered stretches follow at residues 467–486, 655–675, 801–849, and 863–886; these read KASL…QDSD, ELAQ…ETES, RGPV…PEGR, and TANT…PRSF. The span at 655-674 shows a compositional bias: basic and acidic residues; it reads ELAQEQESKQRLEGERRETE. Positions 835–849 are enriched in basic and acidic residues; that stretch reads ATRHGGEPDLRPEGR. The Phorbol-ester/DAG-type zinc finger occupies 878–927; that stretch reads SHTLRPRSFPSPTKCLRCTSLMLGLGRQGLGCDACGYFCHTTCAPQAPPC. Positions 947–1066 constitute a PH domain; sequence GTAYEGFLSV…WLQVLGELQR (120 aa). Positions 1092 to 1366 constitute a CNH domain; sequence LPHTLCAAIL…RPLNPEGSLF (275 aa). Positions 1437–1450 constitute a CRIB domain; that stretch reads ISPPTNFNHLVHVG. Residues 1442-1551 form a disordered region; sequence NFNHLVHVGP…PLSPELESSP (110 aa). Residues 1457–1470 show a composition bias toward basic and acidic residues; that stretch reads GARDKSPAPEEKGR. Serine 1482 carries the phosphoserine modification. Polar residues predominate over residues 1511-1533; sequence TSLSSESVSCPQGSLSPATSLMQ. The span at 1540–1551 shows a compositional bias: low complexity; it reads SLPLSPELESSP.

The protein belongs to the protein kinase superfamily. AGC Ser/Thr protein kinase family. DMPK subfamily. As to quaternary structure, homodimer and homotetramer via the coiled coil regions. Interacts tightly with GTP-bound but not GDP-bound CDC42. It depends on Mg(2+) as a cofactor. Expressed in heart and skeletal muscle.

It localises to the cytoplasm. The catalysed reaction is L-seryl-[protein] + ATP = O-phospho-L-seryl-[protein] + ADP + H(+). It catalyses the reaction L-threonyl-[protein] + ATP = O-phospho-L-threonyl-[protein] + ADP + H(+). With respect to regulation, maintained in an inactive, closed conformation by an interaction between the kinase domain and the negative autoregulatory C-terminal coiled-coil region. Agonist binding to the phorbol ester binding site disrupts this, releasing the kinase domain to allow N-terminus-mediated dimerization and kinase activation by transautophosphorylation. In terms of biological role, may act as a downstream effector of CDC42 in cytoskeletal reorganization. Contributes to the actomyosin contractility required for cell invasion, through the regulation of MYPT1 and thus MLC2 phosphorylation. This is Serine/threonine-protein kinase MRCK gamma from Homo sapiens (Human).